The primary structure comprises 173 residues: 3-isopropylmalate dehydratase small subunit (173 aa).

Belongs to the LeuD family. LeuD type 2 subfamily. In terms of assembly, heterodimer of LeuC and LeuD.

The catalysed reaction is (2R,3S)-3-isopropylmalate = (2S)-2-isopropylmalate. It participates in amino-acid biosynthesis; L-leucine biosynthesis; L-leucine from 3-methyl-2-oxobutanoate: step 2/4. In terms of biological role, catalyzes the isomerization between 2-isopropylmalate and 3-isopropylmalate, via the formation of 2-isopropylmaleate. In Caldicellulosiruptor saccharolyticus (strain ATCC 43494 / DSM 8903 / Tp8T 6331), this protein is 3-isopropylmalate dehydratase small subunit.